The sequence spans 538 residues: Calcyphosin-2 (538 aa).

Residues 134–146 (RNAENTKSNVTHK) are compositionally biased toward polar residues. The tract at residues 134-154 (RNAENTKSNVTHKQSPRNKID) is disordered. EF-hand domains follow at residues 426–461 (RILTGLGKYFQQLDKEGNGLLDKADFKQALKVFHLE), 462–497 (VSEKDFESAWLILNDNGNGKVDYGEFKRGIIGEMNE), and 498–533 (YRKSYVRKAFMKLDFNKSGSVPIINIRKCYCAKKHS). Ca(2+)-binding residues include D439, N443, D450, N477, N479, K481, E486, D511, N513, S515, S517, and N522.

Abundantly expressed in many tissues. Expressed in brain, colon, heart, kidney, liver, lung, liver, pancreas, placenta, skeletal muscle, testis and thymus. Highest expression in colon, testis, lung, placenta and brain.

This Homo sapiens (Human) protein is Calcyphosin-2.